Here is a 195-residue protein sequence, read N- to C-terminus: Guanylate kinase (195 aa).

In terms of domain architecture, Guanylate kinase-like spans 10–189 (GRLIVFSAPS…TVDAVATRIA (180 aa)). An ATP-binding site is contributed by 17-24 (APSGTGKS).

The protein belongs to the guanylate kinase family.

The protein resides in the cytoplasm. The catalysed reaction is GMP + ATP = GDP + ADP. In terms of biological role, essential for recycling GMP and indirectly, cGMP. This chain is Guanylate kinase, found in Chlorobaculum tepidum (strain ATCC 49652 / DSM 12025 / NBRC 103806 / TLS) (Chlorobium tepidum).